A 311-amino-acid chain; its full sequence is Sensor histidine kinase YcbM (311 aa).

Residues 1 to 21 traverse the membrane as a helical segment; the sequence is MTVLWVAAVIALACLNVIQFI. Over 22–311 the chain is Cytoplasmic; the sequence is MKKKRDGNLA…FTITLKRMTY (290 aa). The Histidine kinase domain occupies 92–310; the sequence is NMSHDLKTPL…AFTITLKRMT (219 aa). A Phosphohistidine; by autocatalysis modification is found at histidine 95.

It localises to the cell membrane. It catalyses the reaction ATP + protein L-histidine = ADP + protein N-phospho-L-histidine.. In terms of biological role, member of the two-component regulatory system YcbM/YcbL. Probably activates YcbL by phosphorylation. The sequence is that of Sensor histidine kinase YcbM (ycbM) from Bacillus subtilis (strain 168).